Reading from the N-terminus, the 689-residue chain is Glycine--tRNA ligase beta subunit (689 aa).

Belongs to the class-II aminoacyl-tRNA synthetase family. As to quaternary structure, tetramer of two alpha and two beta subunits.

Its subcellular location is the cytoplasm. It carries out the reaction tRNA(Gly) + glycine + ATP = glycyl-tRNA(Gly) + AMP + diphosphate. The protein is Glycine--tRNA ligase beta subunit of Shewanella halifaxensis (strain HAW-EB4).